We begin with the raw amino-acid sequence, 114 residues long: Transmembrane protein 14C (114 aa).

Transmembrane regions (helical) follow at residues 8-28 (LMPL…GGII), 33-53 (AGSV…GLGA), 63-83 (VWVF…RFYN), and 89-109 (PAGL…ISLL).

The protein belongs to the TMEM14 family.

The protein localises to the mitochondrion membrane. Functionally, required for normal heme biosynthesis. This is Transmembrane protein 14C (Tmem14c) from Mus musculus (Mouse).